The sequence spans 165 residues: Putative inactive neutral ceramidase B (165 aa).

It belongs to the neutral ceramidase family. As to expression, ubiquitous. Expression is reduced with increasing age and in late-onset Alzheimer disease (LOAD) patients. This reduction is even more pronounced in patients with an affected mother.

The polypeptide is Putative inactive neutral ceramidase B (Homo sapiens (Human)).